A 274-amino-acid chain; its full sequence is D-aminoacyl-tRNA deacylase (274 aa).

It belongs to the DtdA deacylase family. In terms of assembly, monomer. Zn(2+) serves as cofactor.

The enzyme catalyses a D-aminoacyl-tRNA + H2O = a tRNA + a D-alpha-amino acid + H(+). The catalysed reaction is glycyl-tRNA(Ala) + H2O = tRNA(Ala) + glycine + H(+). D-aminoacyl-tRNA deacylase with broad substrate specificity. By recycling D-aminoacyl-tRNA to D-amino acids and free tRNA molecules, this enzyme counteracts the toxicity associated with the formation of D-aminoacyl-tRNA entities in vivo. The protein is D-aminoacyl-tRNA deacylase of Pyrococcus horikoshii (strain ATCC 700860 / DSM 12428 / JCM 9974 / NBRC 100139 / OT-3).